Reading from the N-terminus, the 95-residue chain is Cytochrome b (95 aa).

The next 3 membrane-spanning stretches (helical) occupy residues 1–16, 40–61, and 76–95; these read GLCL…FLAM, WLIR…YLHI, and WNIG…VGYV. Residues histidine 46 and histidine 60 each coordinate heme b.

It belongs to the cytochrome b family. As to quaternary structure, the cytochrome bc1 complex contains 3 respiratory subunits (MT-CYB, CYC1 and UQCRFS1), 2 core proteins (UQCRC1 and UQCRC2) and probably 6 low-molecular weight proteins. Heme b is required as a cofactor.

The protein localises to the mitochondrion inner membrane. Functionally, component of the ubiquinol-cytochrome c reductase complex (complex III or cytochrome b-c1 complex) that is part of the mitochondrial respiratory chain. The b-c1 complex mediates electron transfer from ubiquinol to cytochrome c. Contributes to the generation of a proton gradient across the mitochondrial membrane that is then used for ATP synthesis. The polypeptide is Cytochrome b (mt-cyb) (Gomphosus varius (Bird wrasse)).